A 469-amino-acid chain; its full sequence is Sulfate adenylyltransferase subunit 1 (469 aa).

One can recognise a tr-type G domain in the interval 22–237 (KEVLRFITCG…LEEVPVKSEE (216 aa)). Residues 31–38 (GSVDDGKS) form a G1 region. 31–38 (GSVDDGKS) is a binding site for GTP. The tract at residues 89–93 (GITID) is G2. The G3 stretch occupies residues 110–113 (DTPG). GTP contacts are provided by residues 110–114 (DTPGH) and 165–168 (NKMD). A G4 region spans residues 165 to 168 (NKMD). Positions 202-204 (SAK) are G5.

It belongs to the TRAFAC class translation factor GTPase superfamily. Classic translation factor GTPase family. CysN/NodQ subfamily. Heterodimer composed of CysD, the smaller subunit, and CysN.

The catalysed reaction is sulfate + ATP + H(+) = adenosine 5'-phosphosulfate + diphosphate. It participates in sulfur metabolism; hydrogen sulfide biosynthesis; sulfite from sulfate: step 1/3. In terms of biological role, with CysD forms the ATP sulfurylase (ATPS) that catalyzes the adenylation of sulfate producing adenosine 5'-phosphosulfate (APS) and diphosphate, the first enzymatic step in sulfur assimilation pathway. APS synthesis involves the formation of a high-energy phosphoric-sulfuric acid anhydride bond driven by GTP hydrolysis by CysN coupled to ATP hydrolysis by CysD. The protein is Sulfate adenylyltransferase subunit 1 of Methylorubrum extorquens (strain CM4 / NCIMB 13688) (Methylobacterium extorquens).